A 165-amino-acid polypeptide reads, in one-letter code: MRQKGHRHGRTVSPCAGCKLLRRKCVKDSCVFAPYFPAKEPYKFAIVHKIFGASNVNKMLQELSENHRSDAVDSMVYEANARIQDPVYGCVGTISSLHRQLETLQTQLAFAQAELIHIRTLHRIHTKPPPYTASTVTFPSNKDFYSDIDMAVAYTDDAGDFLWSC.

The LOB domain occupies 13-115; that stretch reads SPCAGCKLLR…TQLAFAQAEL (103 aa).

This sequence belongs to the LOB domain-containing protein family. In terms of tissue distribution, expressed in young shoots, roots, stems, leaves and flowers. At the bases of lateral organs formed from vegetative, inflorescence, and floral meristems.

It localises to the nucleus. The polypeptide is LOB domain-containing protein 3 (LBD3) (Arabidopsis thaliana (Mouse-ear cress)).